Here is a 777-residue protein sequence, read N- to C-terminus: BRCA1-associated RING domain protein 1 (777 aa).

The segment at methionine 1 to glycine 32 is disordered. The interaction with BRCA1 stretch occupies residues methionine 26 to glutamate 119. The segment at cysteine 50–tyrosine 87 adopts an RING-type zinc-finger fold. Residues lysine 160 and lysine 170 each participate in a glycyl lysine isopeptide (Lys-Gly) (interchain with G-Cter in SUMO2) cross-link. The interval proline 167 to leucine 211 is disordered. At serine 186 the chain carries Phosphoserine. Positions lysine 197–lysine 209 are enriched in basic residues. Threonine 299 bears the Phosphothreonine mark. Positions asparagine 356–tyrosine 404 are disordered. The segment covering serine 389–tyrosine 404 has biased composition (low complexity). Serine 391 bears the Phosphoserine mark. Threonine 394 is modified (phosphothreonine). Lysine 423 participates in a covalent cross-link: Glycyl lysine isopeptide (Lys-Gly) (interchain with G-Cter in SUMO2). 3 ANK repeats span residues arginine 427 to histidine 459, alanine 460 to tyrosine 492, and glutamine 493 to isoleucine 525. One copy of the ANK 4; degenerate repeat lies at phenylalanine 526–proline 546. Lysine 548 participates in a covalent cross-link: Glycyl lysine isopeptide (Lys-Gly) (interchain with G-Cter in SUMO2). The flexible linker stretch occupies residues alanine 554–serine 558. BRCT domains are found at residues methionine 560 to isoleucine 653 and leucine 667 to serine 777.

Homo- and heterodimer. Heterodimer (RING-type zinc finger) with BRCA1. Heterodimer (via ANK repeats and BRCT domains) with CSTF1/CSTF-50. Component of the BRCA1-A complex, at least composed of the BRCA1, BARD1, UIMC1/RAP80, ABRAXAS1, BRCC3/BRCC36, BABAM2 and BABAM1/NBA1. Interacts with UBXN1. In terms of processing, processed during apoptosis. The homodimer is more susceptible to proteolytic cleavage than the BARD1/BRCA1 heterodimer.

It localises to the nucleus. It catalyses the reaction S-ubiquitinyl-[E2 ubiquitin-conjugating enzyme]-L-cysteine + [acceptor protein]-L-lysine = [E2 ubiquitin-conjugating enzyme]-L-cysteine + N(6)-ubiquitinyl-[acceptor protein]-L-lysine.. It participates in protein modification; protein ubiquitination. Functionally, E3 ubiquitin-protein ligase. The BRCA1-BARD1 heterodimer specifically mediates the formation of 'Lys-6'-linked polyubiquitin chains and coordinates a diverse range of cellular pathways such as DNA damage repair, ubiquitination and transcriptional regulation to maintain genomic stability. Plays a central role in the control of the cell cycle in response to DNA damage. Acts by mediating ubiquitin E3 ligase activity that is required for its tumor suppressor function. Also forms a heterodimer with CSTF1/CSTF-50 to modulate mRNA processing and RNAP II stability by inhibiting pre-mRNA 3' cleavage. The polypeptide is BRCA1-associated RING domain protein 1 (BARD1) (Homo sapiens (Human)).